Here is an 88-residue protein sequence, read N- to C-terminus: MALQADFDRAAEDVRKLKARPDDGELKELYGLYKQAIVGDINIACPGMLDLKGKAKWEAWNLKKGLSTEDATSAYISKAKELIEKYGI.

The ACB domain maps to 3 to 88; the sequence is LQADFDRAAE…AKELIEKYGI (86 aa). An acyl-CoA contacts are provided by residues R15, 30–34, K56, and Y75; that span reads YGLYK.

The protein belongs to the ACBD7 family.

Its function is as follows. Binds medium- and long-chain acyl-CoA esters. The protein is Acyl-CoA-binding domain-containing protein 7 (ACBD7) of Homo sapiens (Human).